The chain runs to 153 residues: MKTYSAKPADIEKKWVVIDATGLVVGRLATVIAMRLRGKHRATFTPHVDTGDNVVVINAEKVVLTGRKRDQKVYYHHTGFPGGIKERTAKFILDGRFPERVIEKAVERMLARGPLGRKVLGNLRVYKGPTHPHEAQQPTVLDVAALNSKNVRI.

This sequence belongs to the universal ribosomal protein uL13 family. As to quaternary structure, part of the 50S ribosomal subunit.

Functionally, this protein is one of the early assembly proteins of the 50S ribosomal subunit, although it is not seen to bind rRNA by itself. It is important during the early stages of 50S assembly. The chain is Large ribosomal subunit protein uL13 from Azorhizobium caulinodans (strain ATCC 43989 / DSM 5975 / JCM 20966 / LMG 6465 / NBRC 14845 / NCIMB 13405 / ORS 571).